Reading from the N-terminus, the 80-residue chain is Small ribosomal subunit protein bS16 (80 aa).

Belongs to the bacterial ribosomal protein bS16 family.

This is Small ribosomal subunit protein bS16 from Wigglesworthia glossinidia brevipalpis.